The chain runs to 245 residues: Ubiquinone/menaquinone biosynthesis C-methyltransferase UbiE (245 aa).

Residues T71, D92, and 118-119 each bind S-adenosyl-L-methionine; that span reads DA.

The protein belongs to the class I-like SAM-binding methyltransferase superfamily. MenG/UbiE family.

The enzyme catalyses a 2-demethylmenaquinol + S-adenosyl-L-methionine = a menaquinol + S-adenosyl-L-homocysteine + H(+). It catalyses the reaction a 2-methoxy-6-(all-trans-polyprenyl)benzene-1,4-diol + S-adenosyl-L-methionine = a 5-methoxy-2-methyl-3-(all-trans-polyprenyl)benzene-1,4-diol + S-adenosyl-L-homocysteine + H(+). It participates in quinol/quinone metabolism; menaquinone biosynthesis; menaquinol from 1,4-dihydroxy-2-naphthoate: step 2/2. Its pathway is cofactor biosynthesis; ubiquinone biosynthesis. Its function is as follows. Methyltransferase required for the conversion of demethylmenaquinol (DMKH2) to menaquinol (MKH2) and the conversion of 2-polyprenyl-6-methoxy-1,4-benzoquinol (DDMQH2) to 2-polyprenyl-3-methyl-6-methoxy-1,4-benzoquinol (DMQH2). The chain is Ubiquinone/menaquinone biosynthesis C-methyltransferase UbiE from Neisseria meningitidis serogroup B (strain ATCC BAA-335 / MC58).